The sequence spans 288 residues: 33 kDa chaperonin (288 aa).

Disulfide bonds link cysteine 236–cysteine 238 and cysteine 269–cysteine 272.

Belongs to the HSP33 family. Under oxidizing conditions two disulfide bonds are formed involving the reactive cysteines. Under reducing conditions zinc is bound to the reactive cysteines and the protein is inactive.

It is found in the cytoplasm. Functionally, redox regulated molecular chaperone. Protects both thermally unfolding and oxidatively damaged proteins from irreversible aggregation. Plays an important role in the bacterial defense system toward oxidative stress. This Syntrophotalea carbinolica (strain DSM 2380 / NBRC 103641 / GraBd1) (Pelobacter carbinolicus) protein is 33 kDa chaperonin.